The primary structure comprises 85 residues: MCLVAPMQCGCASCVRILDALLSAMEALVQMRLLSEEEKTSCASQFLELAIFAVENCRGGRQALLQARGEPASLGEVAGKGPAAD.

Interacts with host IKBKG; this interaction prevents NF-kappa-B activation.

The protein resides in the host cytoplasm. Functionally, plays a role in the inhibition of the host NF-kappa-B pathway by preventing ubiquitin binding-dependent regulation of host IKBKB activation by IKBKG/NEMO. In Molluscum contagiosum virus subtype 1 (MOCV), this protein is Protein MC005 (MC005L).